A 173-amino-acid polypeptide reads, in one-letter code: Probable transcription termination protein NusA (173 aa).

Residues 31-97 (DEKIVFVVKE…EDVWVKKFGN (67 aa)) enclose the KH domain. A compositionally biased stretch (basic and acidic residues) spans 147–162 (ADNRPKKDEIPEKAAE). Residues 147–173 (ADNRPKKDEIPEKAAESSENVQAEENQ) form a disordered region. Polar residues predominate over residues 163–173 (SSENVQAEENQ).

Belongs to the NusA family.

It localises to the cytoplasm. Participates in transcription termination. The sequence is that of Probable transcription termination protein NusA from Methanococcus vannielii (strain ATCC 35089 / DSM 1224 / JCM 13029 / OCM 148 / SB).